Consider the following 48-residue polypeptide: MAVYRCGKCWKTFTDEQLKVLPGVRCPYCGYKIIFMVRKPTIKIVKAI.

C9, C26, and C29 together coordinate Zn(2+).

It belongs to the archaeal Rpo12/eukaryotic RPC10 RNA polymerase subunit family. Part of the RNA polymerase complex. Requires Zn(2+) as cofactor.

The protein localises to the cytoplasm. It catalyses the reaction RNA(n) + a ribonucleoside 5'-triphosphate = RNA(n+1) + diphosphate. Functionally, DNA-dependent RNA polymerase (RNAP) catalyzes the transcription of DNA into RNA using the four ribonucleoside triphosphates as substrates. This chain is DNA-directed RNA polymerase subunit Rpo12, found in Saccharolobus islandicus (strain Y.N.15.51 / Yellowstone #2) (Sulfolobus islandicus).